The chain runs to 228 residues: Ribulose-phosphate 3-epimerase (228 aa).

Substrate is bound at residue Ser11. 3 residues coordinate a divalent metal cation: His36, Asp38, and His69. The active-site Proton acceptor is Asp38. Substrate is bound by residues His69, 145 to 148, 180 to 182, and 202 to 203; these read GFCG, DGG, and AS. An a divalent metal cation-binding site is contributed by Asp180. The active-site Proton donor is Asp180.

The protein belongs to the ribulose-phosphate 3-epimerase family. A divalent metal cation is required as a cofactor.

The enzyme catalyses D-ribulose 5-phosphate = D-xylulose 5-phosphate. The protein operates within carbohydrate degradation. Functionally, catalyzes the reversible epimerization of D-ribulose 5-phosphate to D-xylulose 5-phosphate. This chain is Ribulose-phosphate 3-epimerase, found in Chlamydia muridarum (strain MoPn / Nigg).